Here is a 158-residue protein sequence, read N- to C-terminus: Adenosine 5'-monophosphoramidase HNT1 (158 aa).

In terms of domain architecture, HIT spans 26–129 (IFCKIIKSEI…IPKRDEKSGL (104 aa)). AMP is bound by residues 51–52 (DI), N103, 109–111 (HQE), and 116–118 (HFH). The Histidine triad motif signature appears at 114–118 (HVHFH). Residue H116 is the Tele-AMP-histidine intermediate of the active site.

Belongs to the HINT family. In terms of assembly, homodimer. Interacts with KIN28. Mg(2+) is required as a cofactor.

It catalyses the reaction adenosine 5'-phosphoramidate + H2O = AMP + NH4(+). Its function is as follows. Hydrolyzes adenosine 5'-monophosphoramidate substrates such as AMP-morpholidate, AMP-N-alanine methyl ester, AMP-alpha-acetyl lysine methyl ester and AMP-NH2. Plays a role in the regulation of kinase KIN28 function. Essential for growth on galactose media at elevated temperatures. The chain is Adenosine 5'-monophosphoramidase HNT1 from Saccharomyces cerevisiae (strain ATCC 204508 / S288c) (Baker's yeast).